A 318-amino-acid polypeptide reads, in one-letter code: Olfactory receptor 10H1 (318 aa).

Over 1 to 25 (MQRANHSTVTQFILVGFSVFPHLQL) the chain is Extracellular. N-linked (GlcNAc...) asparagine glycosylation occurs at Asn-5. Residues 26–46 (MLFLLFLLMYLFTLLGNLLIM) form a helical membrane-spanning segment. The Cytoplasmic segment spans residues 47–54 (ATVWSERS). The helical transmembrane segment at 55–75 (LHTPMYLFLCALSVSEILYTV) threads the bilayer. Over 76 to 99 (AIIPRMLADLLSTQRSIAFLACAS) the chain is Extracellular. Cys-97 and Cys-189 are joined by a disulfide. Residues 100–120 (QMFFSFSFGFTHSFLLTVMGY) traverse the membrane as a helical segment. Residues 121 to 139 (DRYVAICHPLRYNVLMSPR) lie on the Cytoplasmic side of the membrane. The chain crosses the membrane as a helical span at residues 140-160 (GCACLVGCSWAGGLVMGMVVT). Over 161–197 (SAIFHLAFCGHKEIHHFACHVPPLLKLACGDDVLVVA) the chain is Extracellular. Residues 198-218 (KGVGLVCITALLGCFLLILLS) form a helical membrane-spanning segment. The Cytoplasmic portion of the chain corresponds to 219 to 238 (YAFIVAAILKIPSAEGRNKA). A helical transmembrane segment spans residues 239–259 (FSTCASHLTVVVVHYGFASVI). Residues 260-272 (YLKPKSPQSLEGD) are Extracellular-facing. Residues 273-293 (TLMGITYTVLTPFLSPIIFSL) form a helical membrane-spanning segment. Residues 294–318 (RNKELKVAMKKTFFSKLYPEKNVMM) lie on the Cytoplasmic side of the membrane.

It belongs to the G-protein coupled receptor 1 family.

The protein resides in the cell membrane. Functionally, odorant receptor. The polypeptide is Olfactory receptor 10H1 (OR10H1) (Homo sapiens (Human)).